Consider the following 104-residue polypeptide: ATP synthase subunit c (104 aa).

Transmembrane regions (helical) follow at residues 37 to 57 (LLGAGVAIIGVAGAGIGQGAV) and 83 to 103 (AGIAESGAIYALVVAILLIFV).

Belongs to the ATPase C chain family. As to quaternary structure, F-type ATPases have 2 components, F(1) - the catalytic core - and F(0) - the membrane proton channel. F(1) has five subunits: alpha(3), beta(3), gamma(1), delta(1), epsilon(1). F(0) has three main subunits: a(1), b(2) and c(10-14). The alpha and beta chains form an alternating ring which encloses part of the gamma chain. F(1) is attached to F(0) by a central stalk formed by the gamma and epsilon chains, while a peripheral stalk is formed by the delta and b chains.

It localises to the cell membrane. In terms of biological role, f(1)F(0) ATP synthase produces ATP from ADP in the presence of a proton or sodium gradient. F-type ATPases consist of two structural domains, F(1) containing the extramembraneous catalytic core and F(0) containing the membrane proton channel, linked together by a central stalk and a peripheral stalk. During catalysis, ATP synthesis in the catalytic domain of F(1) is coupled via a rotary mechanism of the central stalk subunits to proton translocation. Key component of the F(0) channel; it plays a direct role in translocation across the membrane. A homomeric c-ring of between 10-14 subunits forms the central stalk rotor element with the F(1) delta and epsilon subunits. This chain is ATP synthase subunit c, found in Mesoplasma florum (strain ATCC 33453 / NBRC 100688 / NCTC 11704 / L1) (Acholeplasma florum).